Here is a 1178-residue protein sequence, read N- to C-terminus: Autophagy-related protein 11 (1178 aa).

Coiled-coil stretches lie at residues Glu-538–Thr-572 and Ser-696–Glu-850.

It belongs to the ATG11 family. In terms of assembly, homodimer and potential homooligomers. Interacts with ATG1 kinase. Interacts with the ATG19 cargo protein transporter. Interacts with the ATG34 cargo protein transporter. Interacts with ATG9. Interacts with ATG17. Interacts with ATG20. Interacts with ATG30. Interacts with ATG32; to recruit ATG11 to mitochondria. Interacts with ATG36. Interacts with YPT1. In terms of processing, acetylated by the NuA4 histone acetyltransferase (HAT) complex.

It is found in the preautophagosomal structure membrane. Its subcellular location is the vacuole membrane. Its function is as follows. Involved in cytoplasm to vacuole transport (Cvt), pexophagy, mitophagy and nucleophagy. Recruits mitochondria for their selective degradation via autophagy (mitophagy) during starvation, through its interaction with ATG32. Works as scaffold proteins that recruit ATG proteins to the pre-autophagosome (PAS), the site of vesicle/autophagosome formation. Required for ATG9 anterograde transport from the mitochondria to the PAS. Also recruits the ATG19-prAPE1 complex to the PAS. Required for the Cvt vesicles completion. Plays a significant role in life span extension. The sequence is that of Autophagy-related protein 11 (ATG11) from Saccharomyces cerevisiae (strain ATCC 204508 / S288c) (Baker's yeast).